A 527-amino-acid polypeptide reads, in one-letter code: Protein PLASTID TRANSCRIPTIONALLY ACTIVE 12, chloroplastic (527 aa).

The transit peptide at 1-30 (MASISTTTWLYRGQVCTDSGKSSNCIVQRR) directs the protein to the chloroplast. The PHYA-interacting region 1 (PIR1) stretch occupies residues 1-115 (MASISTTTWL…ASIPGEDYWP (115 aa)). The segment at 89–188 (SYMDSTSGKL…NDSSDGFVTY (100 aa)) is disordered. A compositionally biased stretch (acidic residues) spans 163 to 181 (TNDEVSDSEDSSEEEENDS). 2 consecutive short sequence motifs (nuclear localization signal) follow at residues 204–211 (DKKLGRPH) and 235–242 (WRKPEKEQ). The PHYA-interacting region 2 (PIR2) stretch occupies residues 252–352 (DVETVFLKAM…EMFSHQTDRE (101 aa)). Acidic residues predominate over residues 458 to 471 (GENDDDEDDADVEK). Residues 458–527 (GENDDDEDDA…LMDFEEETDP (70 aa)) form a disordered region. Positions 485–504 (ETPELRTAKPKPKKEGRMSL) are enriched in basic and acidic residues. The segment covering 506-527 (EAVDDAENLTDFLMDFEEETDP) has biased composition (acidic residues). The Required and sufficient for transcriptional transactivation activity and to trigger PIF proteins degradation motif lies at 512 to 520 (ENLTDFLMD).

Component of the transcriptionally active chromosome (TAC) complexes. Interacts with PTAC14 and PTAC7. Binds directly to PTAC6/PAP8 in the nucleus. Interacts with MED14. Binds to SL1/MTERF3. Binds to photoactivated phytochromes (e.g. PHYA and PHYB) via their photosensory domains; these interactions stimulate its light-mediated accumulation. Associates, via its N-terminal region, with phytochrome-interacting factors (PIFs) including PIF1, PIF3, PIF4, PIF5, PIF6, BHLH72/PIF7, UNE10/PIF8 and PIL1. Binds to RAD4. Associates with MRL7/RCB. Mostly expressed in cotyledons, leaves, stems and flowers, but barely in roots.

It is found in the plastid. The protein localises to the chloroplast. Its subcellular location is the nucleus. Its function is as follows. Involved in plastid gene expression. Acidic transcriptional coactivator necessary for the transactivation of many PIFs target genes (class B genes), particularly during the regulation of hypocotyl growth. Plays dual opposite roles in regulating hypocotyl growth, preventing it in red and far-red conditions, but promoting it otherwise. Required in the nucleus for the initiation of photomorphogenesis mediated by phytochromes (PHYs) (e.g. PHYA and PHYB) by mediating PHYs localization to photobodies, especially in response to red and far-red light, and implicating phytochrome nuclear bodies as sites of proteolysis for PHYs and PIFs proteins (e.g. PIF1 and PIF3). Acts downstream of PHYs and upstream of DET1. Involved in UV tolerance in both roots and hypocotyls, specifically in dark conditions. Element of a PIF4/HMR/MED14-dependent thermoresponsive process; acts as a PIF4 transcriptional coactivator to trigger the thermoresponsive growth-relevant genes (e.g. mainly involved in biosynthesis and signaling of the phytohormone auxin) and promote warm-temperature-dependent (e.g. 27 degrees Celsius) PIF4 and MED14 stabilization and accumulation, being more prominently involved in long days (LD) and continuous red light (Rc) than in short days (SD), thus modulating warm temperature elicitation of MED14-dependent thermomorphogenesis (e.g. hypocotyl elongation). The protein is Protein PLASTID TRANSCRIPTIONALLY ACTIVE 12, chloroplastic of Arabidopsis thaliana (Mouse-ear cress).